Reading from the N-terminus, the 478-residue chain is Putative sulfate transporter YbaR (478 aa).

12 consecutive transmembrane segments (helical) span residues 19 to 39 (ILAGILVALALIPEAIGFSII), 42 to 62 (VDPMVGLYASFCIAIIISIFG), 65 to 85 (PGMISAATGSMAVVMVSLVAD), 87 to 107 (GLQYLFAATILTGIIQVILGI), 121 to 141 (VMIGFVNALAILIFSAQLPQF), 143 to 163 (GASWSMYAMLAGSLVIIYVLP), 168 to 188 (AVPSPLVAIIVMTIIAVTFHV), 220 to 240 (IIFPYSIALAFVGLLESLLTA), 259 to 279 (GQGIANIVTGFFGGMAGCAMI), 295 to 315 (SAFVAGAFLMFLIAVLSHVVV), 345 to 365 (APLTDSIVMVVTVVTVVVTDD), and 366 to 386 (LSKGVFVGVLLSAVFFVAKIS). One can recognise an STAS domain in the interval 389-478 (KIVSHAEDQK…ASKSLMKQMA (90 aa)).

The protein belongs to the SLC26A/SulP transporter (TC 2.A.53) family.

Its subcellular location is the cell membrane. This Bacillus subtilis (strain 168) protein is Putative sulfate transporter YbaR (ybaR).